We begin with the raw amino-acid sequence, 330 residues long: Syntaxin-121 (330 aa).

A compositionally biased stretch (polar residues) spans Met-1–Lys-10. The segment at Met-1–Gly-39 is disordered. Residues Met-1 to Trp-284 lie on the Cytoplasmic side of the membrane. Residues Thr-12 to Val-28 show a composition bias toward gly residues. One can recognise a t-SNARE coiled-coil homology domain in the interval Val-212 to Ala-274. A helical; Anchor for type IV membrane protein transmembrane segment spans residues Thr-285–Leu-305. At Lys-306–Ala-330 the chain is on the vesicular side. Residues Asn-311–Ala-330 are disordered. The span at Pro-320–Ala-330 shows a compositional bias: pro residues.

The protein belongs to the syntaxin family. Interacts with SNAP32. In terms of tissue distribution, expressed in roots, stems, leaf blades and leaf sheaths.

The protein resides in the cell membrane. Functionally, vesicle trafficking protein that functions in the secretory pathway. Involved in plant defense by mediating host resistance to the rice blast fungus Magnaporthe oryzae. The interaction with SNAP32 may contribute to host resistance to the rice blast fungus. The protein is Syntaxin-121 of Oryza sativa subsp. japonica (Rice).